Reading from the N-terminus, the 56-residue chain is PI-stichotoxin-Hcr2o (56 aa).

The 51-residue stretch at 4–54 folds into the BPTI/Kunitz inhibitor domain; sequence CLEPKVVGPCKARIRRFYFDSETGKCTPFIYGGCGGNGNNFETLHACRAIC. 3 disulfides stabilise this stretch: C4-C54, C13-C37, and C29-C50.

It belongs to the venom Kunitz-type family. Sea anemone type 2 potassium channel toxin subfamily.

Its subcellular location is the secreted. It is found in the nematocyst. In terms of biological role, this recombinant serine protease inhibitor inhibits both trypsin (Ki=21 nM) and chymotrypsin (Ki=500 nM). It possesses anti-inflammatory activity in vitro. It inhibits macrophage LPS-induced nitric oxide synthesis, and blocks histamine influence on intracellular calcium concentration in murine bone marrow-derived macrophages, which can indicate inhibition of H1-histamine receptor (HRH1). In vitro, it shows cytoprotective activity in the oxidative stress agent 6-hydroxydopamine (6-OHDA)-induced neurotoxicity model. In this model, it decreases reactive oxygen species (ROS) levels, and increases cell viability in a correlated manner. It is possible that the observed effect is due to the ability of this peptides to act as free-radical scavenger. In vivo, it shows analgesic activity, since it increases hot plate and tail flick withdrawal latencies, when using a mice thermal pain stimulation model. This chain is PI-stichotoxin-Hcr2o, found in Radianthus crispa (Leathery sea anemone).